The following is a 201-amino-acid chain: Recombination protein RecR (201 aa).

The segment at 57–72 (CADCRTFTEQEICTIC) adopts a C4-type zinc-finger fold. Residues 81 to 176 (GLICVVESPA…DASRIAHGVP (96 aa)) enclose the Toprim domain.

Belongs to the RecR family.

Functionally, may play a role in DNA repair. It seems to be involved in an RecBC-independent recombinational process of DNA repair. It may act with RecF and RecO. The sequence is that of Recombination protein RecR from Erwinia tasmaniensis (strain DSM 17950 / CFBP 7177 / CIP 109463 / NCPPB 4357 / Et1/99).